Here is a 111-residue protein sequence, read N- to C-terminus: Large ribosomal subunit protein eL31 (111 aa).

The protein belongs to the eukaryotic ribosomal protein eL31 family.

The sequence is that of Large ribosomal subunit protein eL31 (RPL31) from Encephalitozoon cuniculi (strain GB-M1) (Microsporidian parasite).